Reading from the N-terminus, the 3018-residue chain is Genome polyprotein (3018 aa).

An N-acetylserine; by host modification is found at Ser2. The segment at 2–23 is interaction with STAT1; that stretch reads STLPKPQRKTKRNTNRRPMDVK. The interaction with EIF2AK2/PKR stretch occupies residues 2–58; that stretch reads STLPKPQRKTKRNTNRRPMDVKFPGGGQIVGGVYLLPRKGPRLGVRATRKTSERSQP. Positions 2–59 are interaction with DDX3X; the sequence is STLPKPQRKTKRNTNRRPMDVKFPGGGQIVGGVYLLPRKGPRLGVRATRKTSERSQPR. The interval 2 to 75 is disordered; sequence STLPKPQRKT…PKARQPQGRH (74 aa). Residues 2 to 168 are Cytoplasmic-facing; that stretch reads STLPKPQRKT…EDGINYATGN (167 aa). Short sequence motifs (nuclear localization signal) lie at residues 5 to 13 and 38 to 43; these read PKPQRKTKR and PRKGPR. Over residues 7-16 the composition is skewed to basic residues; that stretch reads PQRKTKRNTN. Ser53 carries the post-translational modification Phosphoserine; by host. 2 short sequence motifs (nuclear localization signal) span residues 58-64 and 66-71; these read PRGRRQP and PKARQP. Phosphoserine; by host occurs at positions 99 and 116. The segment at 112–152 is important for endoplasmic reticulum and mitochondrial localization; sequence PRRRSRNLGKVIDTLTCGFADLMWYIPVVGAPLGGVAAALA. Residues 122–173 form an interaction with APOA2 region; sequence VIDTLTCGFADLMWYIPVVGAPLGGVAAALAHGVRAIEDGINYATGNLPGCS. An important for lipid droplets localization region spans residues 164–167; that stretch reads YATG. The helical transmembrane segment at 169 to 189 threads the bilayer; the sequence is LPGCSFSIFLLALLSCLTTPA. Positions 178-191 are cleaved as a propeptide — ER anchor for the core protein, removed in mature form by host signal peptidase; sequence LLALLSCLTTPASA. At 190–358 the chain is on the lumenal side; sequence SALTYGNSSG…FGGHWGILLA (169 aa). Residues Asn196, Asn209, Asn234, and Asn250 are each glycosylated (N-linked (GlcNAc...) asparagine; by host). The important for fusion stretch occupies residues 265–296; it reads LAGAAVVCSSLYIGDLCGSLFLAGQLFAFQPR. N-linked (GlcNAc...) asparagine; by host glycosylation occurs at Asn305. A helical membrane pass occupies residues 359–379; it reads VAYFGMAGNWLKVLAVLFLFA. The Lumenal portion of the chain corresponds to 380–729; the sequence is GVEAQTMIAH…WEYIVLMFLV (350 aa). The tract at residues 385–411 is HVR1; it reads TMIAHGVSQTTSGFASLLTPGAKQNIQ. N-linked (GlcNAc...) (high mannose) asparagine; by host glycosylation is found at Asn416, Asn422, and Asn429. 4 cysteine pairs are disulfide-bonded: Cys428–Cys552, Cys451–Cys458, Cys486–Cys494, and Cys503–Cys508. Asn447 carries N-linked (GlcNAc...) asparagine; by host glycosylation. Residues 474–478 form an HVR2 region; sequence KNVSG. A glycan (N-linked (GlcNAc...) asparagine; by host) is linked at Asn475. Positions 480 to 493 are CD81-binding 1; the sequence is SDDRPYCWHYAPRP. Residue Asn532 is glycosylated (N-linked (GlcNAc...) asparagine; by host). The CD81-binding 2 stretch occupies residues 544 to 551; the sequence is PPTGGWFG. The N-linked (GlcNAc...) asparagine; by host glycan is linked to Asn556. A disulfide bridge connects residues Cys564 and Cys569. A glycan (N-linked (GlcNAc...) asparagine; by host) is linked at Asn577. Intrachain disulfides connect Cys585–Cys589, Cys601–Cys624, and Cys611–Cys648. Asn627 and Asn649 each carry an N-linked (GlcNAc...) (high mannose) asparagine; by host glycan. Cys656 and Cys681 are disulfide-bonded. The tract at residues 664–675 is PKR/eIF2-alpha phosphorylation homology domain (PePHD); it reads IEMSPLLFSTTQ. A helical transmembrane segment spans residues 730-750; that stretch reads LADARICTCLWLMLLISTVEA. Topologically, residues 751–761 are lumenal; sequence AVERLVVLNAA. The chain crosses the membrane as a helical span at residues 762-782; it reads SAAGTAGWWWAVLFLCCVWYV. At 783–786 the chain is on the cytoplasmic side; that stretch reads KGRL. The helical transmembrane segment at 787–807 threads the bilayer; the sequence is VPACTYMALGMWPLLLTILAL. Residues 808–817 lie on the Lumenal side of the membrane; sequence PPRAYAMDNE. Residues 818–838 traverse the membrane as a helical segment; it reads QAASLGAVGLLVITIFSITPM. The Cytoplasmic portion of the chain corresponds to 839-885; the sequence is YKKLLNCFIWWNQYFLARAEAMVHEWVPDLRVRGGRDSIILLTCLLH. A helical transmembrane segment spans residues 886 to 906; it reads PQLGFEVTKILLAVLAPLYIL. Residues 907-932 are Lumenal-facing; sequence QYSLLKVPYFVRAHILLRACLLVRRL. Residues 907–1030 enclose the Peptidase C18 domain; that stretch reads QYSLLKVPYF…DMQRGGWKLL (124 aa). The tract at residues 908–1210 is protease NS2-3; sequence YSLLKVPYFV…PVENMETTMR (303 aa). Cys926 is lipidated: S-palmitoyl cysteine; by host. A helical transmembrane segment spans residues 933-953; it reads AGGKYVQACLLRLGAWTGTFV. Positions 933–953 are interaction with host SCPS1; sequence AGGKYVQACLLRLGAWTGTFV. The Cytoplasmic portion of the chain corresponds to 954-1661; it reads YDHLAPLSDW…CMSADLEVIT (708 aa). Catalysis depends on for protease NS2 activity; shared with dimeric partner residues His956, Glu976, and Cys997. Positions 1031-1212 constitute a Peptidase S29 domain; that stretch reads APITAYAQQT…ENMETTMRSP (182 aa). Residues His1087 and Asp1111 each act as charge relay system; for serine protease NS3 activity in the active site. Residues Cys1127 and Cys1129 each contribute to the Zn(2+) site. The active-site Charge relay system; for serine protease NS3 activity is Ser1169. Zn(2+)-binding residues include Cys1175 and His1179. 1234 to 1241 is a binding site for ATP; that stretch reads APTGSGKS. Mg(2+) is bound by residues Ser1241 and Glu1321. A DECH box motif is present at residues 1320–1323; it reads DECH. Positions 1490–1502 are RNA-binding; the sequence is QRRGRTGRGKPGV. Residues 1662-1682 form a helical membrane-spanning segment; the sequence is STWVLVGGVLAALAAYCLSVG. Residues 1683–1694 form an NS3-binding region; that stretch reads CVVICGRITLTG. Over 1683–1809 the chain is Cytoplasmic; the sequence is CVVICGRITL…SLTSPLRTSQ (127 aa). Residues 1810 to 1830 form a helical membrane-spanning segment; it reads TLLLNILGGWIAAQVAPPPAS. The Lumenal portion of the chain corresponds to 1831 to 1832; it reads TA. Residues 1833-1853 traverse the membrane as a helical segment; it reads FVVSGLAGAAVGSIRLGRVLV. Position 1854 (Asp1854) is a topological domain, cytoplasmic. The helical transmembrane segment at 1855–1875 threads the bilayer; the sequence is VLAGYGAGVSGALVAFKIMSG. Residues 1876–1885 lie on the Lumenal side of the membrane; sequence ECPSTEDMVN. A helical transmembrane segment spans residues 1886 to 1906; it reads LLPALLSPGVALVGVVCAAIL. Topologically, residues 1907 to 1976 are cytoplasmic; it reads RRHVGPAEGA…WVNEDTATPC (70 aa). Cys1976 carries S-palmitoyl cysteine; by host lipidation. An intramembrane segment occupies 1977–2006; the sequence is ATSWLRDVWDWVCTVLSDFKVWLQAKLFPR. Residues 2007-2997 lie on the Cytoplasmic side of the membrane; that stretch reads LPGIPFLSCQ…YHSVSQARPR (991 aa). Residues Cys2015, Cys2033, Cys2035, and Cys2056 each contribute to the Zn(2+) site. The segment at 2124-2212 is FKBP8-binding; it reads EFFTEVDGVR…ASSSANQLSA (89 aa). The interval 2124–2337 is transcriptional activation; the sequence is EFFTEVDGVR…PVPPPRRKRL (214 aa). The interval 2139 to 2143 is interaction with non-structural protein 4A; sequence PPCKP. The tract at residues 2192–2215 is disordered; it reads RRLKKGSPPSLASSSANQLSAPSL. The interaction with host SKP2 stretch occupies residues 2193-2445; it reads RLKKGSPPSL…ALITPCAAEE (253 aa). A phosphoserine; by host mark is found at Ser2198, Ser2201, Ser2205, Ser2211, and Ser2214. Over residues 2198 to 2215 the composition is skewed to low complexity; the sequence is SPPSLASSSANQLSAPSL. Residues 2214–2253 form an ISDR region; sequence SLRATCTTSQKHPEMELLQANLLWKHEMGSHIPRVQSENK. An interaction with EIF2AK2/PKR region spans residues 2214–2279; that stretch reads SLRATCTTSQ…REISVSVECH (66 aa). An NS4B-binding region spans residues 2253-2311; sequence KVVVLDSFELYPLEYEEREISVSVECHRQPRCKFPPVFPVWARPDNNPPFIQAWQMPGY. A V3 region spans residues 2304 to 2382; it reads QAWQMPGYEP…SITSPVPPDP (79 aa). The SH3-binding motif lies at 2327–2330; that stretch reads APVP. A Nuclear localization signal motif is present at residues 2332–2340; the sequence is PRRKRLVHL. Lys2355 participates in a covalent cross-link: Glycyl lysine isopeptide (Lys-Gly) (interchain with G-Cter in ubiquitin). Residues 2359-2417 are disordered; sequence ESSNDPGPSSDSGLSITSPVPPDPTTPEDAGSEAESYSSMPPLEGEPGDPDLSSGSWST. Residues 2360 to 2373 are compositionally biased toward low complexity; sequence SSNDPGPSSDSGLS. Phosphoserine; by host occurs at positions 2456 and 2469. The 119-residue stretch at 2641 to 2759 folds into the RdRp catalytic domain; it reads PMGFSYDTRC…ICESAGVQED (119 aa). The Mg(2+) site is built by Asp2647, Asp2745, and Asp2746. The helical transmembrane segment at 2998 to 3018 threads the bilayer; it reads FLLLGLLLLTVGVGIFLLPAR.

The protein belongs to the hepacivirus polyprotein family. Homooligomer. Interacts with E1 (via C-terminus). Interacts with the non-structural protein 5A. Interacts (via N-terminus) with host STAT1 (via SH2 domain); this interaction results in decreased STAT1 phosphorylation and ubiquitin-mediated proteasome-dependent STAT1 degradation, leading to decreased IFN-stimulated gene transcription. Interacts with host STAT3; this interaction constitutively activates STAT3. Interacts with host LTBR receptor. Interacts with host TNFRSF1A receptor and possibly induces apoptosis. Interacts with host HNRPK. Interacts with host YWHAE. Interacts with host UBE3A/E6AP. Interacts with host DDX3X. Interacts with host APOA2. Interacts with host RXRA protein. Interacts with host SP110 isoform 3/Sp110b; this interaction sequesters the transcriptional corepressor SP110 away from the nucleus. Interacts with host CREB3 nuclear transcription protein; this interaction triggers cell transformation. Interacts with host ACY3. Interacts with host C1QR1. Interacts with host RBM24; this interaction, which enhances the interaction of the mature core protein with 5'-UTR, may inhibit viral translation and favor replication. Interacts with host EIF2AK2/PKR; this interaction induces the autophosphorylation of EIF2AK2. Part of the viral assembly initiation complex composed of NS2, E1, E2, NS3, NS4A, NS5A and the mature core protein. As to quaternary structure, forms a heterodimer with envelope glycoprotein E2. Interacts with mature core protein. Interacts with protease NS2. The heterodimer E1/E2 interacts with host CLDN1; this interaction plays a role in viral entry into host cell. Interacts with host SPSB2 (via C-terminus). Part of the viral assembly initiation complex composed of NS2, E1, E2, NS3, NS4A, NS5A and the mature core protein. Interacts with host NEURL3; this interaction prevents E1 binding to glycoprotein E2. In terms of assembly, forms a heterodimer with envelope glycoprotein E1. Interacts with host CD81 and SCARB1 receptors; these interactions play a role in viral entry into host cell. Interacts with host EIF2AK2/PKR; this interaction inhibits EIF2AK2 and probably allows the virus to evade the innate immune response. Interacts with host CD209/DC-SIGN and CLEC4M/DC-SIGNR. Interact with host SPCS1; this interaction is essential for viral particle assembly. Interacts with protease NS2. The heterodimer E1/E2 interacts with host CLDN1; this interaction plays a role in viral entry into host cell. Part of the viral assembly initiation complex composed of NS2, E1, E2, NS3, NS4A, NS5A and the mature core protein. Interacts with host SLC3A2/4F2hc; the interaction may facilitate viral entry into host cell. Interacts with human PLSCR1. Homohexamer. Homoheptamer. Interacts with protease NS2. As to quaternary structure, homodimer. Interacts with host SPCS1; this interaction is essential for viral particle assembly. Interacts with envelope glycoprotein E1. Interacts with envelope glycoprotein E2. Interacts with viroporin p7. Interacts with serine protease/helicase NS3. Part of the replication complex composed of NS2, NS3, NS4A, NS4B, NS5A and the RNA-directed RNA polymerase embedded in an ER-derived membranous web. Part of the viral assembly initiation complex composed of NS2, E1, E2, NS3, NS4A, NS5A and the mature core protein. In terms of assembly, interacts with protease NS2. Interacts with non-structural protein 4A; this interaction stabilizes the folding of NS3 serine protease. NS3-NS4A interaction is essential for NS3 activation and allows membrane anchorage of the latter. NS3/NS4A complex also prevents phosphorylation of host IRF3, thus preventing the establishment of dsRNA induced antiviral state. Interacts with host MAVS; this interaction leads to the cleavage and inhibition of host MAVS. Interacts with host TICAM1; this interaction leads to the cleavage and inhibition of host TICAM1. Interacts with host TANK-binding kinase/TBK1; this interaction results in the inhibition of the association between TBK1 and IRF3, which leads to the inhibition of IRF3 activation. Interacts with host RBM24. Part of the replication complex composed of NS2, NS3, NS4A, NS4B, NS5A and the RNA-directed RNA polymerase embedded in an ER-derived membranous web. Part of the viral assembly initiation complex composed of NS2, E1, E2, NS3, NS4A, NS5A and the mature core protein. Interacts with NS3 serine protease; this interaction stabilizes the folding of NS3 serine protease. NS3-NS4A interaction is essential for NS3 activation and allows membrane anchorage of the latter. Interacts with non-structural protein 5A (via N-terminus). Part of the replication complex composed of NS2, NS3, NS4A, NS4B, NS5A and the RNA-directed RNA polymerase embedded in an ER-derived membranous web. Part of the viral assembly initiation complex composed of NS2, E1, E2, NS3, NS4A, NS5A and the mature core protein. As to quaternary structure, homomultimer. Interacts with non-structural protein NS5A. Interacts with host PLA2G4C; this interaction likely initiates the recruitment of replication complexes to lipid droplets. Interacts with host STING; this interaction disrupts the interaction between STING and TBK1 thereby suppressing the interferon signaling. Part of the replication complex composed of NS2, NS3, NS4A, NS4B, NS5A and the RNA-directed RNA polymerase embedded in an ER-derived membranous web. In terms of assembly, monomer. Homodimer; dimerization is required for RNA-binding. Interacts with the mature core protein. Interacts (via N-terminus) with non-structural protein 4A. Interacts with non-structural protein 4B. Interacts (via region D2) with RNA-directed RNA polymerase. Part of the viral assembly initiation complex composed of NS2, E1, E2, NS3, NS4A, NS5A and the mature core protein. Part of the replication complex composed of NS2, NS3, NS4A, NS4B, NS5A and the RNA-directed RNA polymerase embedded in an ER-derived membranous web. Interacts with host GRB2. Interacts with host BIN1. Interacts with host PIK3R1. Interacts with host SRCAP. Interacts with host FKBP8. Interacts (via C-terminus) with host VAPB (via MSP domain). Interacts with host EIF2AK2/PKR; this interaction leads to disruption of EIF2AK2 dimerization by NS5A and probably allows the virus to evade the innate immune response. Interacts (via N-terminus) with host PACSIN2 (via N-terminus); this interaction attenuates protein kinase C alpha-mediated phosphorylation of PACSIN2 by disrupting the interaction between PACSIN2 and PRKCA. Interacts (via N-terminus) with host SRC kinase (via SH2 domain). Interacts with most Src-family kinases. Interacts with host IFI27 and SKP2; promotes the ubiquitin-mediated proteasomal degradation of NS5A. Interacts with host GPS2. Interacts with host TNFRSF21; this interaction allows the modulation by the virus of JNK, p38 MAPK, STAT3, and Akt signaling pathways in a DR6-dependent manner. Interacts (via N-terminus) with host CIDEB (via N-terminus); this interaction seems to regulate the association of HCV particles with APOE. Interacts with host CHKA/Choline Kinase-alpha; CHKA bridges host PI4KA and NS5A and potentiates NS5A-stimulated PI4KA activity, which then facilitates the targeting of the ternary complex to the ER for viral replication. Interacts with host SPSB2 (via C-terminus); this interaction targets NS5A for ubiquitination and degradation. Interacts with host RAB18; this interaction may promote the association of NS5A and other replicase components with lipid droplets. Interacts (via region D2) with host PPIA/CYPA; the interaction stimulates RNA-binding ability of NS5A and is dependent on the peptidyl-prolyl cis-trans isomerase activity of PPIA/CYPA. Interacts with host TRIM14; this interaction induces the degradation of NS5A. Homooligomer. Interacts with non-structural protein 5A. Interacts with host VAPB. Interacts with host PRK2/PKN2. Interacts with host HNRNPA1 and SEPT6; these interactions facilitate viral replication. Part of the replication complex composed of NS2, NS3, NS4A, NS4B, NS5A and the RNA-directed RNA polymerase. Requires Zn(2+) as cofactor. Mg(2+) serves as cofactor. Specific enzymatic cleavages in vivo yield mature proteins. The structural proteins, core, E1, E2 and p7 are produced by proteolytic processing by host signal peptidases. The core protein precursor is synthesized as a 23 kDa, which is retained in the ER membrane through the hydrophobic signal peptide. Cleavage by the signal peptidase releases the 21 kDa mature core protein. The cleavage of the core protein precursor occurs between aminoacids 176 and 188 but the exact cleavage site is not known. Some degraded forms of the core protein appear as well during the course of infection. The other proteins (p7, NS2, NS3, NS4A, NS4B, NS5A and NS5B) are cleaved by the viral proteases. Autoprocessing between NS2 and NS3 is mediated by the NS2 cysteine protease catalytic domain and regulated by the NS3 N-terminal domain. Post-translationally, phosphorylated by host PKC and PKA. In terms of processing, ubiquitinated; mediated by UBE3A and leading to core protein subsequent proteasomal degradation. Highly N-glycosylated. Post-translationally, palmitoylation is required for NS2/3 autoprocessing and E2 recruitment to membranes. In terms of processing, palmitoylated. This modification may play a role in its polymerization or in protein-protein interactions. Phosphorylated on serines in a basal form termed p56. p58 is a hyperphosphorylated form of p56. p56 and p58 coexist in the cell in roughly equivalent amounts. Hyperphosphorylation is dependent on the presence of NS4A. Host CSNK1A1/CKI-alpha or RPS6KB1 kinases may be responsible for NS5A phosphorylation. Post-translationally, tyrosine phosphorylation is essential for the interaction with host SRC. In terms of processing, the N-terminus is phosphorylated by host PRK2/PKN2.

Its subcellular location is the host endoplasmic reticulum membrane. It localises to the host mitochondrion membrane. The protein localises to the virion. It is found in the host cytoplasm. The protein resides in the host nucleus. Its subcellular location is the host lipid droplet. It localises to the virion membrane. The protein localises to the host mitochondrion. It is found in the host cell membrane. The protein resides in the host perinuclear region. The enzyme catalyses Hydrolysis of four peptide bonds in the viral precursor polyprotein, commonly with Asp or Glu in the P6 position, Cys or Thr in P1 and Ser or Ala in P1'.. The catalysed reaction is a ribonucleoside 5'-triphosphate + H2O = a ribonucleoside 5'-diphosphate + phosphate + H(+). It carries out the reaction ATP + H2O = ADP + phosphate + H(+). It catalyses the reaction RNA(n) + a ribonucleoside 5'-triphosphate = RNA(n+1) + diphosphate. Its activity is regulated as follows. Inhibited by the antiviral drug hexamethylene amiloride. Inhibition by amantadine appears to be genotype-dependent. Also inhibited by long-alkyl-chain iminosugar derivatives. With respect to regulation, activity is up-regulated by PRK2/PKN2-mediated phosphorylation. Its function is as follows. Packages viral RNA to form a viral nucleocapsid, and promotes virion budding. Participates in the viral particle production as a result of its interaction with the non-structural protein 5A. Binds RNA and may function as a RNA chaperone to induce the RNA structural rearrangements taking place during virus replication. Modulates viral translation initiation by interacting with viral IRES and 40S ribosomal subunit. Affects various cell signaling pathways, host immunity and lipid metabolism. Prevents the establishment of cellular antiviral state by blocking the interferon-alpha/beta (IFN-alpha/beta) and IFN-gamma signaling pathways and by blocking the formation of phosphorylated STAT1 and promoting ubiquitin-mediated proteasome-dependent degradation of STAT1. Activates STAT3 leading to cellular transformation. Regulates the activity of cellular genes, including c-myc and c-fos. May repress the promoter of p53, and sequester CREB3 and SP110 isoform 3/Sp110b in the cytoplasm. Represses cell cycle negative regulating factor CDKN1A, thereby interrupting an important check point of normal cell cycle regulation. Targets transcription factors involved in the regulation of inflammatory responses and in the immune response: suppresses TNF-induced NF-kappa-B activation, and activates AP-1. Binds to dendritic cells (DCs) via C1QR1, resulting in down-regulation of T-lymphocytes proliferation. Alters lipid metabolism by interacting with hepatocellular proteins involved in lipid accumulation and storage. Induces up-regulation of FAS promoter activity, and thereby contributes to the increased triglyceride accumulation in hepatocytes (steatosis). Forms a heterodimer with envelope glycoprotein E2, which mediates virus attachment to the host cell, virion internalization through clathrin-dependent endocytosis and fusion with host membrane. Fusion with the host cell is most likely mediated by both E1 and E2, through conformational rearrangements of the heterodimer required for fusion rather than a classical class II fusion mechanism. E1/E2 heterodimer binds host apolipoproteins such as APOB and ApoE thereby forming a lipo-viro-particle (LVP). APOE associated to the LVP allows the initial virus attachment to cell surface receptors such as the heparan sulfate proteoglycans (HSPGs), syndecan-1 (SDC1), syndecan-1 (SDC2), the low-density lipoprotein receptor (LDLR) and scavenger receptor class B type I (SCARB1). The cholesterol transfer activity of SCARB1 allows E2 exposure and binding of E2 to SCARB1 and the tetraspanin CD81. E1/E2 heterodimer binding on CD81 activates the epithelial growth factor receptor (EGFR) signaling pathway. Diffusion of the complex E1-E2-EGFR-SCARB1-CD81 to the cell lateral membrane allows further interaction with Claudin 1 (CLDN1) and occludin (OCLN) to finally trigger HCV entry. In terms of biological role, forms a heterodimer with envelope glycoprotein E1, which mediates virus attachment to the host cell, virion internalization through clathrin-dependent endocytosis and fusion with host membrane. Fusion with the host cell is most likely mediated by both E1 and E2, through conformational rearrangements of the heterodimer required for fusion rather than a classical class II fusion mechanism. The interaction between envelope glycoprotein E2 and host apolipoprotein E/APOE allows the proper assembly, maturation and infectivity of the viral particles. This interaction is probably promoted via the up-regulation of cellular autophagy by the virus. E1/E2 heterodimer binds host apolipoproteins such as APOB and APOE thereby forming a lipo-viro-particle (LVP). APOE associated to the LVP allows the initial virus attachment to cell surface receptors such as the heparan sulfate proteoglycans (HSPGs), syndecan-1 (SDC1), syndecan-1 (SDC2), the low-density lipoprotein receptor (LDLR) and scavenger receptor class B type I (SCARB1). The cholesterol transfer activity of SCARB1 allows E2 exposure and binding of E2 to SCARB1 and the tetraspanin CD81. E1/E2 heterodimer binding on CD81 activates the epithelial growth factor receptor (EGFR) signaling pathway. Diffusion of the complex E1-E2-EGFR-SCARB1-CD81 to the cell lateral membrane allows further interaction with Claudin 1 (CLDN1) and occludin (OCLN) to finally trigger HCV entry. Inhibits host EIF2AK2/PKR activation, preventing the establishment of an antiviral state. Viral ligand for CD209/DC-SIGN and CLEC4M/DC-SIGNR, which are respectively found on dendritic cells (DCs), and on liver sinusoidal endothelial cells and macrophage-like cells of lymph node sinuses. These interactions allow the capture of circulating HCV particles by these cells and subsequent facilitated transmission to permissive cells such as hepatocytes and lymphocyte subpopulations. The interaction between E2 and host amino acid transporter complex formed by SLC3A2 and SLC7A5/LAT1 may facilitate viral entry into host cell. Functionally, ion channel protein that acts as a viroporin and plays an essential role in the assembly, envelopment and secretion of viral particles. Regulates the host cell secretory pathway, which induces the intracellular retention of viral glycoproteins and favors assembly of viral particles. Creates a pore in acidic organelles and releases Ca(2+) and H(+) in the cytoplasm of infected cells, leading to a productive viral infection. High levels of cytoplasmic Ca(2+) may trigger membrane trafficking and transport of viral ER-associated proteins to viroplasms, sites of viral genome replication. This ionic imbalance induces the assembly of the inflammasome complex, which triggers the maturation of pro-IL-1beta into IL-1beta through the action of caspase-1. Targets also host mitochondria and induces mitochondrial depolarization. In addition of its role as a viroporin, acts as a lipid raft adhesion factor. Its function is as follows. Cysteine protease required for the proteolytic auto-cleavage between the non-structural proteins NS2 and NS3. The N-terminus of NS3 is required for the function of NS2 protease (active region NS2-3). Promotes the initiation of viral particle assembly by mediating the interaction between structural and non-structural proteins. Displays three enzymatic activities: serine protease with a chymotrypsin-like fold, NTPase and RNA helicase. NS3 serine protease, in association with NS4A, is responsible for the cleavages of NS3-NS4A, NS4A-NS4B, NS4B-NS5A and NS5A-NS5B. The NS3/NS4A complex prevents phosphorylation of host IRF3, thus preventing the establishment of dsRNA induced antiviral state. The NS3/NS4A complex induces host amino acid transporter component SLC3A2, thus contributing to HCV propagation. NS3 RNA helicase binds to RNA and unwinds both dsDNA and dsRNA in the 3' to 5' direction, and likely resolves RNA complicated stable secondary structures in the template strand. Binds a single ATP and catalyzes the unzipping of a single base pair of dsRNA. Inhibits host antiviral proteins TBK1 and IRF3 thereby preventing the establishment of an antiviral state. Cleaves host MAVS/CARDIF thereby preventing the establishment of an antiviral state. Cleaves host TICAM1/TRIF, thereby disrupting TLR3 signaling and preventing the establishment of an antiviral state. In terms of biological role, induces a specific membrane alteration that serves as a scaffold for the virus replication complex. This membrane alteration gives rise to the so-called ER-derived membranous web that contains the replication complex. NS4B self-interaction contributes to its function in membranous web formation. Promotes host TRIF protein degradation in a CASP8-dependent manner thereby inhibiting host TLR3-mediated interferon signaling. Disrupts the interaction between STING and TBK1 contributing to the inhibition of interferon signaling. Functionally, phosphorylated protein that is indispensable for viral replication and assembly. Both hypo- and hyperphosphorylated states are required for the viral life cycle. The hyperphosphorylated form of NS5A is an inhibitor of viral replication. Involved in RNA-binding and especially in binding to the viral genome. Zinc is essential for RNA-binding. Participates in the viral particle production as a result of its interaction with the mature viral core protein. Its interaction with host VAPB may target the viral replication complex to vesicles. Down-regulates viral IRES translation initiation. Mediates interferon resistance, presumably by interacting with and inhibiting host EIF2AK2/PKR. Prevents BIN1-induced apoptosis. Acts as a transcriptional activator of some host genes important for viral replication when localized in the nucleus. Via the interaction with host PACSIN2, modulates lipid droplet formation in order to promote virion assembly. Modulates TNFRSF21/DR6 signaling pathway for viral propagation. Its function is as follows. RNA-dependent RNA polymerase that performs primer-template recognition and RNA synthesis during viral replication. Initiates RNA transcription/replication at a flavin adenine dinucleotide (FAD), resulting in a 5'- FAD cap on viral RNAs. In this way, recognition of viral 5' RNA by host pattern recognition receptors can be bypassed, thereby evading activation of antiviral pathways. The polypeptide is Genome polyprotein (Hepatitis C virus genotype 6a (isolate EUHK2) (HCV)).